Reading from the N-terminus, the 896-residue chain is MFENILTKIFGSKNERDLKRLQPLVAHIGSLESELETLSEEQLAGKTVEFRQRLAEGASLDSLLPEAFAVVREAGKRVLGMRHFDVQLIGGMVLHKGKIAEMKTGEGKTLVATLAAYLNALPAKGVHVITVNDYLASRDAEWMGRIHRYLGLTVGCIVHGLDDRQRKEAYACDITYGTNNEFGFDYLRDNMKFSLDDYVQRPLSYAIVDEVDSILIDEARTPLIISGPSESSSELYYSVNRIIPMLEKGETIESRDGRVGQTVREYTGDFTIDEKAKTASLTEDGVAKVERLLGVENLYDPGNIELLHHVNQALKAHALFKRDVDYVVKDGEVMIVDEFTGRLMPGRRWSDGLHQAVEAKEGVKIESENQTLATITFQNYFRMYDKLAGMTGTADTEATEFNQIYSLDVMVIPTNRPLARKDEGDVIYKTNREKFLAVVEDIIERHAGGQPILVGTISIENSEVLSSMLRKRGVPHNVLNAKHHEREAEIVAQAGRKGAVTIATNMAGRGTDIILGGNPDLLAQRESAGAENPEAALAQALVKYQEVCAQEKQDVLAAGGLYILGTERHESRRIDNQLRGRAGRQGDPGASRFYLSLEDDLLRIFGSHRVAYIMDRLKIPEGEPIEHRFISKAIANAQKKVEAHNFDIRKHLIEYDDVMNTQRNVIYAQRREVLGGEQLPETFAAIIDEMVEDIVATFCPEKSAPEDWGWASLNEDFFSQFNMPPAPLEVPASDLTPTVMLEHLKQQVDARLQEREAEFTPPVMLHLMKVLLLQTIDAQWKDHLLSIDHLKEGIGLRGYAQRNPKEEYKREAYELFLQMMGRIRQEVVQKLFRIQLAKEQDVERMEQRQRRHRISLNRAGGEAEAAKPVVRDEKKVGRNDPCPCGSGLKYKKCCGQ.

Residues Q87, 105–109 (GEGKT), and D512 each bind ATP. The tract at residues 858-886 (RAGGEAEAAKPVVRDEKKVGRNDPCPCGS) is disordered. A compositionally biased stretch (basic and acidic residues) spans 869 to 878 (VVRDEKKVGR). 4 residues coordinate Zn(2+): C882, C884, C893, and C894.

Belongs to the SecA family. As to quaternary structure, monomer and homodimer. Part of the essential Sec protein translocation apparatus which comprises SecA, SecYEG and auxiliary proteins SecDF-YajC and YidC. Zn(2+) is required as a cofactor.

It localises to the cell inner membrane. It is found in the cytoplasm. The catalysed reaction is ATP + H2O + cellular proteinSide 1 = ADP + phosphate + cellular proteinSide 2.. Its function is as follows. Part of the Sec protein translocase complex. Interacts with the SecYEG preprotein conducting channel. Has a central role in coupling the hydrolysis of ATP to the transfer of proteins into and across the cell membrane, serving as an ATP-driven molecular motor driving the stepwise translocation of polypeptide chains across the membrane. In Syntrophotalea carbinolica (strain DSM 2380 / NBRC 103641 / GraBd1) (Pelobacter carbinolicus), this protein is Protein translocase subunit SecA.